A 458-amino-acid chain; its full sequence is Argininosuccinate lyase (458 aa).

This sequence belongs to the lyase 1 family. Argininosuccinate lyase subfamily.

Its subcellular location is the cytoplasm. It catalyses the reaction 2-(N(omega)-L-arginino)succinate = fumarate + L-arginine. It participates in amino-acid biosynthesis; L-arginine biosynthesis; L-arginine from L-ornithine and carbamoyl phosphate: step 3/3. The polypeptide is Argininosuccinate lyase (Actinobacillus pleuropneumoniae serotype 7 (strain AP76)).